Here is a 101-residue protein sequence, read N- to C-terminus: Osteocalcin (101 aa).

Positions 1 to 19 (MKLAILTVLLLGAAVLCLG) are cleaved as a signal peptide. Residues 20-52 (SKDADHSNSVGESHSSEAFISRQESASFARLKR) constitute a propeptide that is removed on maturation. The region spanning 53-99 (SYGNNVGQGAAVGSPLESQREVCELNPDCDELADHIGFQEAYRRFYG) is the Gla domain. Ca(2+) is bound by residues glutamate 69, glutamate 73, glutamate 76, and aspartate 82. 4-carboxyglutamate occurs at positions 69, 73, and 76. A disulfide bridge links cysteine 75 with cysteine 81.

This sequence belongs to the osteocalcin/matrix Gla protein family. In terms of processing, gamma-carboxyglutamate residues are formed by vitamin K dependent carboxylation by GGCX. These residues are essential for the binding of calcium.

It is found in the secreted. In terms of biological role, the carboxylated form is one of the main organic components of the bone matrix, which constitutes 1-2% of the total bone protein. The carboxylated form binds strongly to apatite and calcium. The polypeptide is Osteocalcin (bglap) (Xenopus laevis (African clawed frog)).